The sequence spans 755 residues: Cartilage oligomeric matrix protein (755 aa).

The first 19 residues, 1 to 19 (MSPTACVLVLALAALRATG), serve as a signal peptide directing secretion. The segment at 21 to 84 (GQIPLGGDLA…PARTPGLSVR (64 aa)) is COMP N-terminal. The EGF-like 1 domain occupies 85-124 (PVALCAPGSCFPGVVCTETATGARCGPCPPGYTGNGSHCT). Disulfide bonds link cysteine 89–cysteine 100, cysteine 94–cysteine 109, cysteine 112–cysteine 123, cysteine 129–cysteine 140, cysteine 134–cysteine 149, cysteine 152–cysteine 176, cysteine 182–cysteine 195, cysteine 189–cysteine 204, cysteine 207–cysteine 219, cysteine 227–cysteine 241, cysteine 235–cysteine 251, cysteine 253–cysteine 264, cysteine 280–cysteine 285, cysteine 290–cysteine 310, cysteine 326–cysteine 346, cysteine 349–cysteine 369, cysteine 385–cysteine 405, cysteine 408–cysteine 428, cysteine 446–cysteine 466, cysteine 482–cysteine 502, and cysteine 518–cysteine 739. Asparagine 119 carries an N-linked (GlcNAc...) asparagine glycan. Positions 125 to 177 (DVNECNAHPCFPRVRCINTSPGFHCEACPPGFSGPTHEGVGLTFAKTNKQVCT) constitute an EGF-like 2; calcium-binding domain. In terms of domain architecture, EGF-like 3; calcium-binding spans 178-220 (DINECETGQHNCVPNSVCVNTRGSFQCGPCQPGFVGDQRSGCQ). The EGF-like 4 domain occupies 223 to 265 (GQHFCPDGSPSPCHEKADCILERDGSRSCVCAVGWAGNGLLCG). TSP type-3 repeat units lie at residues 266 to 298 (RDTD…NSGQ), 299 to 334 (EDVD…NPDQ), 335 to 357 (RNSD…NDDQ), 358 to 393 (KDTD…NFDQ), 394 to 416 (SDSD…NPDQ), 417 to 454 (RDVD…NSAQ), 455 to 490 (QDSD…NPGQ), and 491 to 526 (EDND…EVTL). The segment at 295–501 (NSGQEDVDRD…DNDRDGVGDA (207 aa)) is disordered. Composition is skewed to basic and acidic residues over residues 332–344 (PDQR…KWGD) and 350–365 (RSQK…RDGQ). Serine 394 bears the Phosphoserine mark. Basic and acidic residues-rich tracts occupy residues 412 to 424 (DNPD…HDFV) and 456 to 465 (DSDHDGKGDA). Residues 525-755 (TLTDFRAFQT…DYERHRLRRA (231 aa)) are mediates cell survival and induction of the IAP family of survival proteins. In terms of domain architecture, TSP C-terminal spans 530-744 (RAFQTVVLDP…LRYRCNDTIP (215 aa)). The N-linked (GlcNAc...) asparagine glycan is linked to asparagine 740.

Belongs to the thrombospondin family. As to quaternary structure, pentamer; disulfide-linked. Exists in a more compact conformation in the presence of calcium and shows a more extended conformation in the absence of calcium. Interacts with ITGB3, ITGA5 and FN1. Binding to FN1 requires the presence of divalent cations (Ca(2+), Mg(2+) or Mn(2+)). The greatest amount of binding is seen in the presence of Mn(2+). Interacts with MATN1, MATN3, MATN4 and ACAN. Binds heparin, heparan sulfate and chondroitin sulfate. EDTA dimishes significantly its binding to ACAN and abolishes its binding to MATN3, MATN4 and chondroitin sulfate. Interacts with collagen I, II and IX, and interaction with these collagens is dependent on the presence of zinc ions. Interacts with ADAMTS12. Interacts with ITGA7. Ca(2+) is required as a cofactor. In terms of processing, proteolytically cleaved by metalloproteases ADAMTS4 and ADAMTS1 with ADAMTS4 showing more potent activity.

The protein resides in the secreted. It localises to the extracellular space. The protein localises to the extracellular matrix. Its function is as follows. Plays a role in the structural integrity of cartilage via its interaction with other extracellular matrix proteins such as the collagens and fibronectin. Can mediate the interaction of chondrocytes with the cartilage extracellular matrix through interaction with cell surface integrin receptors. Could play a role in the pathogenesis of osteoarthritis. Potent suppressor of apoptosis in both primary chondrocytes and transformed cells. Suppresses apoptosis by blocking the activation of caspase-3 and by inducing the IAP family of survival proteins (BIRC3, BIRC2, BIRC5 and XIAP). Essential for maintaining a vascular smooth muscle cells (VSMCs) contractile/differentiated phenotype under physiological and pathological stimuli. Maintains this phenotype of VSMCs by interacting with ITGA7. In Rattus norvegicus (Rat), this protein is Cartilage oligomeric matrix protein.